The primary structure comprises 219 residues: GPI ethanolamine phosphate transferase, stabilizing subunit (219 aa).

Transmembrane regions (helical) follow at residues 11–31, 42–62, 86–106, 113–133, 155–175, and 189–209; these read YTNL…SFFV, TWLC…YLVV, CFLM…APLI, FLFA…LLGP, LQIT…PIPL, and TLGA…WIYW.

Belongs to the PIGF family. Part of the ethanolamine phosphate transferase 3 complex composed by PIGO and PIGF. Part of the ethanolamine phosphate transferase 2 complex with PIGG. PIGF is required to stabilize PIGG and PIGO.

The protein resides in the endoplasmic reticulum membrane. Its pathway is glycolipid biosynthesis; glycosylphosphatidylinositol-anchor biosynthesis. Stabilizing subunit of the ethanolamine phosphate transferase 3 and ethanolamine phosphate transferase 2 complexes that sequentially transfer an ethanolamine phosphate (EtNP) from a phosphatidylethanolamine (PE) to the 6-OH position of the third alpha-1,2-linked mannose and the second alpha-1,6-linked mannose of the alpha-D-Man-(1-&gt;2)-alpha-D-Man-(1-&gt;6)-2-PEtn-alpha-D-Man-(1-&gt;4)-alpha-D-GlcN-(1-&gt;6)-(1-radyl,2-acyl-sn-glycero-3-phospho)-2-acyl-inositol (also termed H6) intermediate to generate a 6-PEtn-alpha-D-Man-(1-&gt;2)-6-PEtn-alpha-D-Man-(1-&gt;6)-2-PEtn-alpha-D-Man-(1-&gt;4)-alpha-D-GlcN-(1-&gt;6)-(1-radyl,2-acyl-sn-glycero-3-phospho)-2-acyl-inositol (also termed H8). Participates in the tenth and eleventh steps of the glycosylphosphatidylinositol-anchor biosynthesis, in association with PIGO and PIGG, respectively. This is GPI ethanolamine phosphate transferase, stabilizing subunit from Mus musculus (Mouse).